The sequence spans 550 residues: Dihydroxy-acid dehydratase (550 aa).

Mg(2+) is bound at residue aspartate 78. Cysteine 119 lines the [2Fe-2S] cluster pocket. Mg(2+)-binding residues include aspartate 120 and lysine 121. Lysine 121 carries the post-translational modification N6-carboxylysine. Cysteine 191 lines the [2Fe-2S] cluster pocket. Glutamate 440 lines the Mg(2+) pocket. Serine 466 acts as the Proton acceptor in catalysis.

Belongs to the IlvD/Edd family. In terms of assembly, homodimer. [2Fe-2S] cluster serves as cofactor. It depends on Mg(2+) as a cofactor.

The catalysed reaction is (2R)-2,3-dihydroxy-3-methylbutanoate = 3-methyl-2-oxobutanoate + H2O. The enzyme catalyses (2R,3R)-2,3-dihydroxy-3-methylpentanoate = (S)-3-methyl-2-oxopentanoate + H2O. Its pathway is amino-acid biosynthesis; L-isoleucine biosynthesis; L-isoleucine from 2-oxobutanoate: step 3/4. It participates in amino-acid biosynthesis; L-valine biosynthesis; L-valine from pyruvate: step 3/4. Functionally, functions in the biosynthesis of branched-chain amino acids. Catalyzes the dehydration of (2R,3R)-2,3-dihydroxy-3-methylpentanoate (2,3-dihydroxy-3-methylvalerate) into 2-oxo-3-methylpentanoate (2-oxo-3-methylvalerate) and of (2R)-2,3-dihydroxy-3-methylbutanoate (2,3-dihydroxyisovalerate) into 2-oxo-3-methylbutanoate (2-oxoisovalerate), the penultimate precursor to L-isoleucine and L-valine, respectively. This is Dihydroxy-acid dehydratase from Methanococcus vannielii (strain ATCC 35089 / DSM 1224 / JCM 13029 / OCM 148 / SB).